A 360-amino-acid chain; its full sequence is Terpene synthase 5 (360 aa).

The DDxx(x)D/E motif motif lies at 87 to 92 (DDFLER). An NDxxSxxxD/E motif motif is present at residues 237-245 (NDCVSYAKE).

This sequence belongs to the terpene synthase family.

Its function is as follows. Terpene synthase that converts its substrate farnesyl diphosphate (FPP) into 2 yet unidentified sesquiterpenes. This Dictyostelium purpureum (Slime mold) protein is Terpene synthase 5.